Consider the following 1435-residue polypeptide: DNA polymerase III PolC-type (1435 aa).

The Exonuclease domain occupies 404-562 (YVVYDIETTG…YDSSVLTNIF (159 aa)).

It belongs to the DNA polymerase type-C family. PolC subfamily.

It localises to the cytoplasm. It catalyses the reaction DNA(n) + a 2'-deoxyribonucleoside 5'-triphosphate = DNA(n+1) + diphosphate. Its function is as follows. Required for replicative DNA synthesis. This DNA polymerase also exhibits 3' to 5' exonuclease activity. This chain is DNA polymerase III PolC-type, found in Mycoplasmopsis pulmonis (strain UAB CTIP) (Mycoplasma pulmonis).